The primary structure comprises 361 residues: 3-dehydroquinate synthase (361 aa).

NAD(+) is bound by residues 104–108, 128–129, lysine 140, and lysine 149; these read GVIGD and TT. Zn(2+) is bound by residues glutamate 182, histidine 245, and histidine 262.

It belongs to the sugar phosphate cyclases superfamily. Dehydroquinate synthase family. NAD(+) is required as a cofactor. Co(2+) serves as cofactor. It depends on Zn(2+) as a cofactor.

The protein localises to the cytoplasm. The catalysed reaction is 7-phospho-2-dehydro-3-deoxy-D-arabino-heptonate = 3-dehydroquinate + phosphate. Its pathway is metabolic intermediate biosynthesis; chorismate biosynthesis; chorismate from D-erythrose 4-phosphate and phosphoenolpyruvate: step 2/7. Functionally, catalyzes the conversion of 3-deoxy-D-arabino-heptulosonate 7-phosphate (DAHP) to dehydroquinate (DHQ). This Halalkalibacterium halodurans (strain ATCC BAA-125 / DSM 18197 / FERM 7344 / JCM 9153 / C-125) (Bacillus halodurans) protein is 3-dehydroquinate synthase.